The chain runs to 229 residues: 7-cyano-7-deazaguanine synthase (229 aa).

Position 15–25 (15–25 (LSGGLDSATVV)) interacts with ATP. Residues Cys194, Cys204, Cys207, and Cys210 each contribute to the Zn(2+) site.

Belongs to the QueC family. Zn(2+) serves as cofactor.

The enzyme catalyses 7-carboxy-7-deazaguanine + NH4(+) + ATP = 7-cyano-7-deazaguanine + ADP + phosphate + H2O + H(+). It participates in purine metabolism; 7-cyano-7-deazaguanine biosynthesis. Functionally, catalyzes the ATP-dependent conversion of 7-carboxy-7-deazaguanine (CDG) to 7-cyano-7-deazaguanine (preQ(0)). The protein is 7-cyano-7-deazaguanine synthase of Pseudomonas syringae pv. syringae (strain B728a).